Here is a 108-residue protein sequence, read N- to C-terminus: Complement inhibitor CirpT2 (108 aa).

Residues 1–19 form the signal peptide; it reads MRTLVASLCVFAVFSAVCC. Intrachain disulfides connect Cys40-Cys64, Cys59-Cys98, Cys76-Cys99, and Cys85-Cys104.

It belongs to the CirpT family. In terms of tissue distribution, expressed in salivary glands.

The protein resides in the secreted. Its function is as follows. Complement inhibitor. Prevents complement-mediated activation of C5 by sterically preventing direct binding of C5 to its convertase (binding with domains MG4 and MG5). Binds C5 at a different binding site than the other tick complement inhibitors OmCI and RaCI3, and the drug eculizumab. Inhibits the complement in human, rat and guinea pig, and also shows a reduced inhibition in rabbit and pig. The polypeptide is Complement inhibitor CirpT2 (Dermacentor andersoni (Rocky mountain wood tick)).